We begin with the raw amino-acid sequence, 1183 residues long: DNA-directed RNA polymerase subunit beta (1183 aa).

The protein belongs to the RNA polymerase beta chain family. In terms of assembly, the RNAP catalytic core consists of 2 alpha, 1 beta, 1 beta' and 1 omega subunit. When a sigma factor is associated with the core the holoenzyme is formed, which can initiate transcription.

The enzyme catalyses RNA(n) + a ribonucleoside 5'-triphosphate = RNA(n+1) + diphosphate. In terms of biological role, DNA-dependent RNA polymerase catalyzes the transcription of DNA into RNA using the four ribonucleoside triphosphates as substrates. The chain is DNA-directed RNA polymerase subunit beta from Staphylococcus aureus (strain Mu50 / ATCC 700699).